Consider the following 286-residue polypeptide: Mating type protein A-1 (286 aa).

A DNA-binding region (alpha box) is located at residues 40-95 (AAKKKVNGFMSFRSYYSPLFSQLPQKERSPFMTILWQHDPFHNEWNFMCSVYSSIR).

This sequence belongs to the MATALPHA1 family.

The protein resides in the nucleus. In terms of biological role, required for expression of the heterokaryon incompatibility and sexual functions. The chain is Mating type protein A-1 (MTA-1) from Neurospora africana.